The chain runs to 598 residues: Beta-hexosaminidase A (598 aa).

A signal peptide spans 1–11; that stretch reads MSFITSAHATA. Residue D305 is part of the active site.

The protein belongs to the glycosyl hydrolase 3 family.

It carries out the reaction Hydrolysis of terminal non-reducing N-acetyl-D-hexosamine residues in N-acetyl-beta-D-hexosaminides.. Its function is as follows. Most active towards p-nitrophenyl-N-acetyl-beta-D-glucosaminide(PNP-beta-GlcNAc) and diacetylchitobiose. The protein is Beta-hexosaminidase A (cht60) of Pseudoalteromonas piscicida.